The sequence spans 470 residues: Low molecular weight neuronal intermediate filament (470 aa).

The tract at residues 1-91 (MTSRELYTSS…KIVRTNEKEQ (91 aa)) is head. The IF rod domain occupies 88 to 399 (EKEQLQGLND…KLLEGEETRL (312 aa)). Residues 91-123 (QLQGLNDRFVTYIEKVHHLEQQNKLLESEVTLL) are coil 1A. The linker 1 stretch occupies residues 121–136 (TLLRQKHSEPSRLSHI). The segment at 137 to 232 (YEQEIRELRS…KVHEEEIAEL (96 aa)) is coil 1B. The tract at residues 233 to 251 (QASVQEAQISVEMDVVSKP) is linker 12. Residues 252–270 (DLTAALKEIRMQYEVLSAR) are coil 2A. The interval 271–279 (NQQSSEEWY) is linker 2. A coil 2B region spans residues 280–395 (QAKIANVSLE…AAYRKLLEGE (116 aa)). A tail region spans residues 396-470 (ETRLTSVGGG…EKISQKAAAN (75 aa)). The span at 414–431 (FSSGSYSGGRSSTTSTIS) shows a compositional bias: low complexity. The disordered stretch occupies residues 414-470 (FSSGSYSGGRSSTTSTISIRKEEKKESPEGGKGGSSGQPKTSKPGDQEKISQKAAAN). The segment covering 432-442 (IRKEEKKESPE) has biased composition (basic and acidic residues).

Belongs to the intermediate filament family. As to expression, nervous system; in axons in the PNS and in small perikarya in the dorsal root ganglion.

The sequence is that of Low molecular weight neuronal intermediate filament from Xenopus laevis (African clawed frog).